A 182-amino-acid polypeptide reads, in one-letter code: Large ribosomal subunit protein uL10 (182 aa).

The protein belongs to the universal ribosomal protein uL10 family. In terms of assembly, part of the ribosomal stalk of the 50S ribosomal subunit. The N-terminus interacts with L11 and the large rRNA to form the base of the stalk. The C-terminus forms an elongated spine to which L12 dimers bind in a sequential fashion forming a multimeric L10(L12)X complex.

Its function is as follows. Forms part of the ribosomal stalk, playing a central role in the interaction of the ribosome with GTP-bound translation factors. This Herminiimonas arsenicoxydans protein is Large ribosomal subunit protein uL10.